The sequence spans 68 residues: Small ribosomal subunit protein bS21 (68 aa).

Belongs to the bacterial ribosomal protein bS21 family.

The polypeptide is Small ribosomal subunit protein bS21 (Jannaschia sp. (strain CCS1)).